A 356-amino-acid chain; its full sequence is MKLTINKNSAKWMQLPRDVLVGHGVLEEIGDVCRDLKMKGNALIVTGSTTNNIAGKRVSNLLESAGCSAEMVLTCKATKEEVEKVMEKALEVETNFLIGVGSGRSIDLAKLASTRLELPFISVPTAASHDGIASSRASIVDNGRSTSAQAQAPIAVIADTEIISAAPFRFLAAGCGDIISNYTAVLDWELASRLRNEYFGAYAAALSRMAARVIIECADSIKPEHETSARLVVKALVSNGVAMSIAGSSRPASGSEHMFSHALDKIAPKPALHGEQCGVGTIMMMYLHGGNWQEIREALKKIGAPVTAEELGIEDRYIIEALLHAHSIRPERYTILGSGLNPSAAEKVARITKVIN.

Residues 103-107 (GRSID) and 125-128 (TAAS) each bind NAD(+). Aspartate 130 contacts substrate. Serine 134 lines the NAD(+) pocket. Aspartate 177 lines the substrate pocket. Positions 177 and 257 each coordinate Zn(2+). Histidine 261 contacts substrate. Residue histidine 273 participates in Zn(2+) binding.

It belongs to the glycerol-1-phosphate dehydrogenase family. The cofactor is Zn(2+).

The protein resides in the cytoplasm. The enzyme catalyses sn-glycerol 1-phosphate + NAD(+) = dihydroxyacetone phosphate + NADH + H(+). The catalysed reaction is sn-glycerol 1-phosphate + NADP(+) = dihydroxyacetone phosphate + NADPH + H(+). The protein operates within membrane lipid metabolism; glycerophospholipid metabolism. In terms of biological role, catalyzes the NAD(P)H-dependent reduction of dihydroxyacetonephosphate (DHAP or glycerone phosphate) to glycerol 1-phosphate (G1P). The G1P thus generated is used as the glycerophosphate backbone of phospholipids in the cellular membranes of Archaea. The polypeptide is Glycerol-1-phosphate dehydrogenase [NAD(P)+] (Methanosarcina barkeri (strain Fusaro / DSM 804)).